The following is a 522-amino-acid chain: F-box-like/WD repeat-containing protein TBL1Y (522 aa).

An N-acetylserine modification is found at Ser2. In terms of domain architecture, LisH spans 4–36 (TSDEVNFLVYRYLQESGFSHSAFTFGIESHISQ). An F-box-like domain is found at 41-86 (GTLVPPSALISILQKGLQYVEAEISINKDGTVFDSRPIESLSLIVA). Lys102 is subject to N6-acetyllysine. Position 130 is a phosphoserine (Ser130). 8 WD repeats span residues 177 to 216 (GHES…NGGS), 233 to 272 (PSNK…ASTL), 274 to 313 (QHKG…AKQQ), 316 to 354 (FHSA…PVKT), 357 to 396 (GHTN…CVHD), 399 to 447 (AHSK…CTHT), 450 to 489 (KHQE…LVHS), and 491 to 521 (QGTG…CVLD). Residue Lys287 forms a Glycyl lysine isopeptide (Lys-Gly) (interchain with G-Cter in SUMO2) linkage.

The protein belongs to the WD repeat EBI family. As to quaternary structure, probable component of the N-Cor repressor complex and some E3 ubiquitin ligase complex. Interacts with NCOR2. As to expression, fetal brain and prostate. Expressed in the cochlear spiral ganglion neurons, and in outer and inner hair cells.

It localises to the nucleus. In terms of biological role, F-box-like protein involved in the recruitment of the ubiquitin/19S proteasome complex to nuclear receptor-regulated transcription units. Plays an essential role in transcription activation mediated by nuclear receptors. Probably acts as integral component of corepressor complexes that mediates the recruitment of the 19S proteasome complex, leading to the subsequent proteasomal degradation of transcription repressor complexes, thereby allowing cofactor exchange. In Homo sapiens (Human), this protein is F-box-like/WD repeat-containing protein TBL1Y (TBL1Y).